A 133-amino-acid polypeptide reads, in one-letter code: Peptidyl-prolyl cis-trans isomerase PIN4 (133 aa).

Basic and acidic residues predominate over residues 1 to 29 (MGKNDKKGADKGGKAKGGDKGKDAKDTKD). The tract at residues 1–42 (MGKNDKKGADKGGKAKGGDKGKDAKDTKDSGSGGKAKGAQSI) is disordered. The PpiC domain maps to 39 to 131 (AQSINVRHIL…FGYHIIMVEG (93 aa)).

Belongs to the PpiC/parvulin rotamase family. PIN4 subfamily.

The catalysed reaction is [protein]-peptidylproline (omega=180) = [protein]-peptidylproline (omega=0). PPIases accelerate the folding of proteins. It catalyzes the cis-trans isomerization of proline imidic peptide bonds in oligopeptides. The protein is Peptidyl-prolyl cis-trans isomerase PIN4 (PIN4) of Gibberella zeae (strain ATCC MYA-4620 / CBS 123657 / FGSC 9075 / NRRL 31084 / PH-1) (Wheat head blight fungus).